The sequence spans 498 residues: RuvB-like helicase 2 (498 aa).

79–86 (GPPSTGKT) contributes to the ATP binding site. Positions 458-498 (VTIGQESTDGSTQPQAKQQEVAQPEATQPQSQPEDDKMETD) are disordered. Positions 461–489 (GQESTDGSTQPQAKQQEVAQPEATQPQSQ) are enriched in polar residues.

The protein belongs to the RuvB family. As to quaternary structure, may form heterododecamers with RVB1. Component of the SWR1 chromatin remodeling complex, the INO80 chromatin remodeling complex, and of the R2TP complex.

Its subcellular location is the nucleus. It catalyses the reaction ATP + H2O = ADP + phosphate + H(+). DNA helicase which participates in several chromatin remodeling complexes, including the SWR1 and the INO80 complexes. The SWR1 complex mediates the ATP-dependent exchange of histone H2A for the H2A variant HZT1 leading to transcriptional regulation of selected genes by chromatin remodeling. The INO80 complex remodels chromatin by shifting nucleosomes and is involved in DNA repair. Also involved in pre-rRNA processing. The sequence is that of RuvB-like helicase 2 (RVB2) from Candida albicans (strain SC5314 / ATCC MYA-2876) (Yeast).